We begin with the raw amino-acid sequence, 558 residues long: Nucleoprotein (558 aa).

Positions M54–I237 are binding site for the cap structure m7GTP. Mn(2+) contacts are provided by D382 and E384. 4 residues coordinate Zn(2+): E392, C499, H502, and C518. D522 contributes to the Mn(2+) binding site.

Belongs to the arenaviridae nucleocapsid protein family. As to quaternary structure, homomultimerizes to form the nucleocapsid. Binds to viral genomic RNA. Interacts with glycoprotein G2. Interacts with protein Z; this interaction probably directs the encapsidated genome to budding sites. Interacts with protein L; this interaction does not interfere with Z-L interaction. Interacts with host IKBKE (via Protein kinase domain); the interaction inhibits IKBKE kinase activity.

Its subcellular location is the virion. The protein localises to the host cytoplasm. In terms of biological role, encapsidates the genome, protecting it from nucleases. The encapsidated genomic RNA is termed the nucleocapsid (NC). Serves as template for viral transcription and replication. The increased presence of protein N in host cell does not seem to trigger the switch from transcription to replication as observed in other negative strain RNA viruses. Through the interaction with host IKBKE, strongly inhibits the phosphorylation and nuclear translocation of host IRF3, a protein involved in interferon activation pathway, leading to the inhibition of interferon-beta and IRF3-dependent promoters activation. Also encodes a functional 3'-5' exoribonuclease that degrades preferentially dsRNA substrates and thereby participates in the suppression of interferon induction. The sequence is that of Nucleoprotein from Lymphocytic choriomeningitis virus (strain WE) (LCMV).